The chain runs to 576 residues: Homeobox protein invected (576 aa).

5 disordered regions span residues 1–68 (MSTL…DEQT), 80–102 (EVEE…NSVL), 305–344 (GGSV…LAQS), 364–410 (NSND…GEDS), and 426–476 (SDRP…RPRT). Over residues 80–91 (EVEEEHDLDLED) the composition is skewed to acidic residues. Composition is skewed to low complexity over residues 309-325 (SGSS…TNGN), 364-381 (NSND…TNTS), and 395-405 (AGAGATGASGK). The span at 450-468 (AGGGGGGVEKGEAADGGGV) shows a compositional bias: gly residues. Residues 471–530 (DKRPRTAFSGTQLARLKHEFNENRYLTEKRRQQLSGELGLNEAQIKIWFQNKRAKLKKSS) constitute a DNA-binding region (homeobox).

This sequence belongs to the engrailed homeobox family. As to expression, expressed in row 6/7 of the embryonic neuroectoderm.

The protein resides in the nucleus. Engrailed (en) and invected (inv) are functionally redundant transcription factors in neuronal precursor cell NB5-3 specification. Inv is unable to substitute for en in other regulatory processes such as maintaining gsb expression in the neuroectoderm after stage 10 of embryogenesis. Maintenance of gsb expression in row 5 of the neuroectoderm involves an as yet unidentified short range signaling molecule. The sequence is that of Homeobox protein invected (inv) from Drosophila melanogaster (Fruit fly).